Reading from the N-terminus, the 257-residue chain is 5'-nucleotidase SurE (257 aa).

A divalent metal cation is bound by residues Asp8, Asp9, Ser40, and Asn93.

Belongs to the SurE nucleotidase family. Requires a divalent metal cation as cofactor.

The protein localises to the cytoplasm. It carries out the reaction a ribonucleoside 5'-phosphate + H2O = a ribonucleoside + phosphate. Functionally, nucleotidase that shows phosphatase activity on nucleoside 5'-monophosphates. The sequence is that of 5'-nucleotidase SurE from Phenylobacterium zucineum (strain HLK1).